Consider the following 144-residue polypeptide: ATP synthase subunit 9, mitochondrial (144 aa).

The transit peptide at 1–63 directs the protein to the mitochondrion; it reads MASTRVLASR…ATRQITQKRA (63 aa). A run of 2 helical transmembrane segments spans residues 83-103 and 120-140; these read TAAI…AALL and AILG…VALM.

Belongs to the ATPase C chain family. F-type ATPases have 2 components, CF(1) - the catalytic core - and CF(0) - the membrane proton channel. CF(1) has five subunits: alpha(3), beta(3), gamma(1), delta(1), epsilon(1). CF(0) has three main subunits: a, b and c.

Its subcellular location is the mitochondrion membrane. Mitochondrial membrane ATP synthase (F(1)F(0) ATP synthase or Complex V) produces ATP from ADP in the presence of a proton gradient across the membrane which is generated by electron transport complexes of the respiratory chain. F-type ATPases consist of two structural domains, F(1) - containing the extramembraneous catalytic core and F(0) - containing the membrane proton channel, linked together by a central stalk and a peripheral stalk. During catalysis, ATP synthesis in the catalytic domain of F(1) is coupled via a rotary mechanism of the central stalk subunits to proton translocation. Part of the complex F(0) domain. A homomeric c-ring of probably 10 subunits is part of the complex rotary element. This chain is ATP synthase subunit 9, mitochondrial (ATP9), found in Podospora anserina (Pleurage anserina).